Here is a 550-residue protein sequence, read N- to C-terminus: Hydroxylamine reductase (550 aa).

[2Fe-2S] cluster contacts are provided by Cys3, Cys6, Cys18, and Cys25. 8 residues coordinate hybrid [4Fe-2O-2S] cluster: His249, Glu273, Cys317, Cys405, Cys433, Cys458, Glu492, and Lys494. Cys405 bears the Cysteine persulfide mark.

This sequence belongs to the HCP family. [2Fe-2S] cluster serves as cofactor. Hybrid [4Fe-2O-2S] cluster is required as a cofactor.

The protein localises to the cytoplasm. The catalysed reaction is A + NH4(+) + H2O = hydroxylamine + AH2 + H(+). Functionally, catalyzes the reduction of hydroxylamine to form NH(3) and H(2)O. This Shigella boydii serotype 18 (strain CDC 3083-94 / BS512) protein is Hydroxylamine reductase.